Reading from the N-terminus, the 226-residue chain is Ribose-5-phosphate isomerase A (226 aa).

Substrate contacts are provided by residues 26 to 29 (TGST), 82 to 85 (DGAD), and 95 to 98 (KGGG). The Proton acceptor role is filled by glutamate 104. Lysine 122 serves as a coordination point for substrate.

This sequence belongs to the ribose 5-phosphate isomerase family. As to quaternary structure, homodimer.

The catalysed reaction is aldehydo-D-ribose 5-phosphate = D-ribulose 5-phosphate. The protein operates within carbohydrate degradation; pentose phosphate pathway; D-ribose 5-phosphate from D-ribulose 5-phosphate (non-oxidative stage): step 1/1. Its function is as follows. Catalyzes the reversible conversion of ribose-5-phosphate to ribulose 5-phosphate. The sequence is that of Ribose-5-phosphate isomerase A from Streptococcus thermophilus (strain ATCC BAA-250 / LMG 18311).